Reading from the N-terminus, the 187-residue chain is Threonylcarbamoyl-AMP synthase (187 aa).

Residues 4-187 (TLTLSEAVTA…DARSGHILRL (184 aa)) enclose the YrdC-like domain.

It belongs to the SUA5 family. TsaC subfamily.

It localises to the cytoplasm. It catalyses the reaction L-threonine + hydrogencarbonate + ATP = L-threonylcarbamoyladenylate + diphosphate + H2O. In terms of biological role, required for the formation of a threonylcarbamoyl group on adenosine at position 37 (t(6)A37) in tRNAs that read codons beginning with adenine. Catalyzes the conversion of L-threonine, HCO(3)(-)/CO(2) and ATP to give threonylcarbamoyl-AMP (TC-AMP) as the acyladenylate intermediate, with the release of diphosphate. This Xylella fastidiosa (strain M12) protein is Threonylcarbamoyl-AMP synthase.